Here is a 550-residue protein sequence, read N- to C-terminus: Small ribosomal subunit protein uS3m (550 aa).

A disordered region spans residues 112–133 (NDDTEEERNEVGGRGAGKRVES).

Belongs to the universal ribosomal protein uS3 family.

The protein resides in the mitochondrion. This Oenothera berteroana (Bertero's evening primrose) protein is Small ribosomal subunit protein uS3m (RPS3).